The following is a 103-amino-acid chain: U6 snRNA-associated Sm-like protein LSm7 (103 aa).

Alanine 2 bears the N-acetylalanine mark. Residues 10–90 (ESILDLSKYI…VVLICPQDGM (81 aa)) form the Sm domain.

Belongs to the snRNP Sm proteins family. As to quaternary structure, component of the precatalytic spliceosome (spliceosome B complex). Component of the U4/U6-U5 tri-snRNP complex, a building block of the precatalytic spliceosome (spliceosome B complex). The U4/U6-U5 tri-snRNP complex is composed of the U4, U6 and U5 snRNAs and at least PRPF3, PRPF4, PRPF6, PRPF8, PRPF31, SNRNP200, TXNL4A, SNRNP40, SNRPB, SNRPD1, SNRPD2, SNRPD3, SNRPE, SNRPF, SNRPG, DDX23, CD2BP2, PPIH, SNU13, EFTUD2, SART1 and USP39, plus LSM2, LSM3, LSM4, LSM5, LSM6, LSM7 and LSM8. LSM2, LSM3, LSM4, LSM5, LSM6, LSM7 and LSM8 form a heptameric, ring-shaped subcomplex (the LSM2-8 complex) that is part of the U4/U6-U5 tri-snRNP complex and the precatalytic spliceosome. Interacts with TACC1.

It is found in the nucleus. Functionally, plays a role in pre-mRNA splicing as component of the U4/U6-U5 tri-snRNP complex that is involved in spliceosome assembly, and as component of the precatalytic spliceosome (spliceosome B complex). The heptameric LSM2-8 complex binds specifically to the 3'-terminal U-tract of U6 snRNA. This is U6 snRNA-associated Sm-like protein LSm7 (LSM7) from Homo sapiens (Human).